Consider the following 234-residue polypeptide: DNA repair protein RecO (234 aa).

It belongs to the RecO family.

Its function is as follows. Involved in DNA repair and RecF pathway recombination. This chain is DNA repair protein RecO, found in Idiomarina loihiensis (strain ATCC BAA-735 / DSM 15497 / L2-TR).